Consider the following 147-residue polypeptide: Arginine vasopressin-induced protein 1 (147 aa).

Disordered regions lie at residues 1–24 and 104–147; these read MGTPASVVSEPPPWQAPIEARGRK and LANP…QIRH. The segment covering 105 to 119 has biased composition (polar residues); it reads ANPQSATETASSEQY. Basic residues predominate over residues 121 to 134; the sequence is HSRKKSARIRRNWR. The span at 137-147 shows a compositional bias: polar residues; that stretch reads GPTSYLHQIRH.

May be involved in MAP kinase activation, epithelial sodium channel (ENaC) down-regulation and cell cycling. This chain is Arginine vasopressin-induced protein 1 (AVPI1), found in Homo sapiens (Human).